The primary structure comprises 161 residues: Endoribonuclease YbeY (161 aa).

The Zn(2+) site is built by H127, H131, and H137.

It belongs to the endoribonuclease YbeY family. Requires Zn(2+) as cofactor.

It localises to the cytoplasm. Functionally, single strand-specific metallo-endoribonuclease involved in late-stage 70S ribosome quality control and in maturation of the 3' terminus of the 16S rRNA. In Listeria innocua serovar 6a (strain ATCC BAA-680 / CLIP 11262), this protein is Endoribonuclease YbeY.